The sequence spans 513 residues: Na(+)/H(+) antiporter NhaB (513 aa).

The next 11 membrane-spanning stretches (helical) occupy residues 23–43, 52–72, 97–117, 144–164, 202–222, 238–258, 303–323, 348–368, 391–411, 447–467, and 475–495; these read LALIIFLILNPLIFIISPFVA, IFTLAMALKCYPLLPGGLLAI, LLLMFMVAGIYFMKQLLLFIF, FLDALTVVAVVISVAVGFYGI, LMMHAGVGTALGGVMTMVGEP, FFLRMSPVTVPVLICGLLTCL, AIIGVWLVTALALHLAEVGLI, TESLPFTALLTVFFSVVAVII, LFYIFNGLLSSISDNVFVGTI, ATPNGQAAFLFLLTSALAPLI, and VWMALPYTLVLTLVGLLCVEF.

It belongs to the NhaB Na(+)/H(+) (TC 2.A.34) antiporter family.

The protein resides in the cell inner membrane. The catalysed reaction is 2 Na(+)(in) + 3 H(+)(out) = 2 Na(+)(out) + 3 H(+)(in). Its function is as follows. Na(+)/H(+) antiporter that extrudes sodium in exchange for external protons. The protein is Na(+)/H(+) antiporter NhaB of Escherichia coli (strain SMS-3-5 / SECEC).